The chain runs to 217 residues: Small ribosomal subunit protein uS3 (217 aa).

A KH type-2 domain is found at 38–106 (IRKFVQKELA…QVHINIIEIK (69 aa)).

Belongs to the universal ribosomal protein uS3 family. As to quaternary structure, part of the 30S ribosomal subunit. Forms a tight complex with proteins S10 and S14.

Functionally, binds the lower part of the 30S subunit head. Binds mRNA in the 70S ribosome, positioning it for translation. This Streptococcus sanguinis (strain SK36) protein is Small ribosomal subunit protein uS3.